Here is an 863-residue protein sequence, read N- to C-terminus: Protein translocase subunit SecA (863 aa).

ATP is bound by residues Gln88, 106–110, and Asp507; that span reads GEGKT. A disordered region spans residues 806-863; sequence KSHEQNEQFLSNTTESGVNENGEAQITKVPRNSPCPCGSGKKYKECHGKSGPKKGILA. Over residues 812–829 the composition is skewed to polar residues; the sequence is EQFLSNTTESGVNENGEA. Residues Cys840, Cys842, Cys851, and His852 each coordinate Zn(2+).

It belongs to the SecA family. Monomer and homodimer. Part of the essential Sec protein translocation apparatus which comprises SecA, SecYEG and auxiliary proteins SecDF-YajC and YidC. It depends on Zn(2+) as a cofactor.

Its subcellular location is the cell inner membrane. It is found in the cytoplasm. It catalyses the reaction ATP + H2O + cellular proteinSide 1 = ADP + phosphate + cellular proteinSide 2.. Functionally, part of the Sec protein translocase complex. Interacts with the SecYEG preprotein conducting channel. Has a central role in coupling the hydrolysis of ATP to the transfer of proteins into and across the cell membrane, serving as an ATP-driven molecular motor driving the stepwise translocation of polypeptide chains across the membrane. The polypeptide is Protein translocase subunit SecA (Campylobacter lari (strain RM2100 / D67 / ATCC BAA-1060)).